The chain runs to 148 residues: Aspartate carbamoyltransferase regulatory chain (148 aa).

Zn(2+) is bound by residues Cys106, Cys111, Cys134, and Cys137.

The protein belongs to the PyrI family. In terms of assembly, contains catalytic and regulatory chains. The cofactor is Zn(2+).

Functionally, involved in allosteric regulation of aspartate carbamoyltransferase. This chain is Aspartate carbamoyltransferase regulatory chain, found in Methanococcus maripaludis (strain C6 / ATCC BAA-1332).